Consider the following 179-residue polypeptide: Ribosome maturation factor RimP (179 aa).

The protein belongs to the RimP family.

Its subcellular location is the cytoplasm. Functionally, required for maturation of 30S ribosomal subunits. This chain is Ribosome maturation factor RimP, found in Chlorobium chlorochromatii (strain CaD3).